The sequence spans 72 residues: Translation initiation factor IF-1 (72 aa).

An S1-like domain is found at 1–72; it reads MSKEEVLEFS…TKGRITYRYK (72 aa).

It belongs to the IF-1 family. Component of the 30S ribosomal translation pre-initiation complex which assembles on the 30S ribosome in the order IF-2 and IF-3, IF-1 and N-formylmethionyl-tRNA(fMet); mRNA recruitment can occur at any time during PIC assembly.

It localises to the cytoplasm. One of the essential components for the initiation of protein synthesis. Stabilizes the binding of IF-2 and IF-3 on the 30S subunit to which N-formylmethionyl-tRNA(fMet) subsequently binds. Helps modulate mRNA selection, yielding the 30S pre-initiation complex (PIC). Upon addition of the 50S ribosomal subunit IF-1, IF-2 and IF-3 are released leaving the mature 70S translation initiation complex. The chain is Translation initiation factor IF-1 from Bartonella tribocorum (strain CIP 105476 / IBS 506).